We begin with the raw amino-acid sequence, 302 residues long: Aspartate carbamoyltransferase catalytic subunit (302 aa).

Positions 51 and 52 each coordinate carbamoyl phosphate. K80 contributes to the L-aspartate binding site. Carbamoyl phosphate-binding residues include R101, H129, and Q132. R162 and R224 together coordinate L-aspartate. Carbamoyl phosphate-binding residues include L263 and P264.

Belongs to the aspartate/ornithine carbamoyltransferase superfamily. ATCase family. Heterododecamer (2C3:3R2) of six catalytic PyrB chains organized as two trimers (C3), and six regulatory PyrI chains organized as three dimers (R2).

It carries out the reaction carbamoyl phosphate + L-aspartate = N-carbamoyl-L-aspartate + phosphate + H(+). Its pathway is pyrimidine metabolism; UMP biosynthesis via de novo pathway; (S)-dihydroorotate from bicarbonate: step 2/3. Functionally, catalyzes the condensation of carbamoyl phosphate and aspartate to form carbamoyl aspartate and inorganic phosphate, the committed step in the de novo pyrimidine nucleotide biosynthesis pathway. The polypeptide is Aspartate carbamoyltransferase catalytic subunit (Azobacteroides pseudotrichonymphae genomovar. CFP2).